The primary structure comprises 341 residues: Heat-inducible transcription repressor HrcA (341 aa).

This sequence belongs to the HrcA family.

Negative regulator of class I heat shock genes (grpE-dnaK-dnaJ and groELS operons). Prevents heat-shock induction of these operons. This Carboxydothermus hydrogenoformans (strain ATCC BAA-161 / DSM 6008 / Z-2901) protein is Heat-inducible transcription repressor HrcA.